We begin with the raw amino-acid sequence, 164 residues long: UPF0304 protein YfbU (164 aa).

Belongs to the UPF0304 family.

This is UPF0304 protein YfbU from Shigella flexneri serotype 5b (strain 8401).